We begin with the raw amino-acid sequence, 363 residues long: Aminomethyltransferase (363 aa).

This sequence belongs to the GcvT family. The glycine cleavage system is composed of four proteins: P, T, L and H.

It catalyses the reaction N(6)-[(R)-S(8)-aminomethyldihydrolipoyl]-L-lysyl-[protein] + (6S)-5,6,7,8-tetrahydrofolate = N(6)-[(R)-dihydrolipoyl]-L-lysyl-[protein] + (6R)-5,10-methylene-5,6,7,8-tetrahydrofolate + NH4(+). In terms of biological role, the glycine cleavage system catalyzes the degradation of glycine. This is Aminomethyltransferase from Staphylococcus aureus (strain bovine RF122 / ET3-1).